A 595-amino-acid chain; its full sequence is MNEDVLRSSHLPIKLAALHFLDLPLSVYYSLPQVSLSTGTKKLFAATAFGAVSLIIIARRFRRRKGRRKANSPVEQETFEFLTTIHLSKESDSQSVPQNSENPYTCNVVSGALYNKLSGSLPSLVSVRSRHSSSSSTCANGSNCWEEAGDAADVCNLLSLPVATPENLYLMGMELFEEALRRWEQALTFRSRQAEDEGSCVSVKLGAGDAIAEESMEDIISADFIQKLESLLQRAYRLQEEFEGSLGVTDPTTHPTNVLLADKHMDLSVREELEDTCLRDSISIASTDSFVSAAELSEHREMRSGHALGSLSPHPFYEDALQMAEEGKISCRVLRTEMLECLGDADFLAKLHCVRQACQVILCERATRAFLADTGKRILSAIIAKARKSPKRFEEVFEEMISFLEHTDHWENTENELSSRGVKHMNFYDVVLDFILMDSFEDLENPPLSIQTVVNNRWLSNSFKETAVASSCWSVLKQKRQHMKVQDGFIAHFYAVCEHISPVLAWGFLGPKCTLQDFCCFFKEQVLFFLKDIFDLDKVRYFSLETLAEDILHLLHRRSDLLMAYLATDVIHHLNGCSDTSVHLVHSALLEAQVQ.

The next 2 membrane-spanning stretches (helical) occupy residues 11–31 (LPIK…YYSL) and 38–58 (TGTK…IIIA).

This sequence belongs to the mitoguardin family. In terms of assembly, homodimer and heterodimer; forms heterodimers with miga2.

The protein resides in the mitochondrion outer membrane. Functionally, regulator of mitochondrial fusion: acts by forming homo- and heterodimers at the mitochondrial outer membrane and facilitating the formation of pld6/MitoPLD dimers. May act by regulating phospholipid metabolism via pld6/MitoPLD. This chain is Mitoguardin 1, found in Danio rerio (Zebrafish).